A 369-amino-acid polypeptide reads, in one-letter code: Glycolate oxidase 1 (369 aa).

The FMN hydroxy acid dehydrogenase domain maps to 1–360 (MGEITNVMEY…TRKHIITESD (360 aa)). Y25 is a binding site for glyoxylate. Residues 78–80 (PTA), S107, 128–130 (QLY), and T156 contribute to the FMN site. Y130 lines the glyoxylate pocket. Residue R165 participates in glyoxylate binding. Residues K231 and S253 each coordinate FMN. Glyoxylate contacts are provided by H255 and R258. H255 acts as the Proton acceptor in catalysis. FMN contacts are provided by residues 286 to 290 (DGGVR) and 309 to 310 (GR).

It belongs to the FMN-dependent alpha-hydroxy acid dehydrogenase family. As to quaternary structure, homotetramer. It depends on FMN as a cofactor.

It localises to the peroxisome. The enzyme catalyses glycolate + O2 = glyoxylate + H2O2. The protein operates within photosynthesis; photorespiration; glycine from 2-phosphoglycolate: step 2/3. Its function is as follows. Catalyzes the oxidation of glycolate to glyoxylate, with a reduction of O2 to H2O2. Is an essential enzyme in photorespiration in plants. Photorespiration plays a vital role in C4 photosynthesis in Z.mays and is essential for maize seedling development and maintaining low (non-toxic) levels of glycolate. The chain is Glycolate oxidase 1 from Zea mays (Maize).